We begin with the raw amino-acid sequence, 599 residues long: MNQRIPQETIEEIRRSVDILDVIGEYVQLKKQGRNYIGLCPFHGENTPSFSVSPDKQLYHCFGCGAGGNAFTFLEQIEGFTFVEAVETLAKRANVVLPERVSPSVKQNRDEELLISIQEFAAKFFHHVLMLTEEGKAGRTYLERRGFTKEQIEHFQIGFAPPHWDALTNVLAKRDVDLKKAGESGLLVERESDGKRYDRFRNRVIFPIRNGKGKIVAFGGRTLGDDKPKYLNSPESPIFQKGKLLYGFYQARPAIRKENEAVLFEGYVDVIAAWKAGVTNGVATLGTSLTEEQARMIRRNAETVIICNDGDAAGAEATFRSADLLQQEGCHVKVAMIPDGLDPDDYIQKYGAERFKKDVIGESLTLMKFKMKYFRMGRNLQNEGERILYIEEIIKEIAKLSKAVERDHYLRQLAEEFSLSLDALKQEQYRIYREMKRQNQVSQGKTNTVRQKKHDFEQKRLLPAYQNAERILLAHMMRNVSVAETVQERLGGRFNVDHYQAIVAHLFAYYAEGFEPDPCTFIQRLEDQELIRVATELAMLEINEEINDQELNDYIEKIEMYPKWLELQQIESALKKETDPVLYATRKQELINMKKQLKL.

A CHC2-type zinc finger spans residues 40 to 64 (CPFHGENTPSFSVSPDKQLYHCFGC). In terms of domain architecture, Toprim spans 259 to 342 (NEAVLFEGYV…KVAMIPDGLD (84 aa)). 3 residues coordinate Mg(2+): Glu265, Asp309, and Asp311.

This sequence belongs to the DnaG primase family. As to quaternary structure, monomer. Interacts with DnaB. Requires Zn(2+) as cofactor. It depends on Mg(2+) as a cofactor.

It carries out the reaction ssDNA + n NTP = ssDNA/pppN(pN)n-1 hybrid + (n-1) diphosphate.. Its function is as follows. RNA polymerase that catalyzes the synthesis of short RNA molecules used as primers for DNA polymerase during DNA replication. The sequence is that of DNA primase from Halalkalibacterium halodurans (strain ATCC BAA-125 / DSM 18197 / FERM 7344 / JCM 9153 / C-125) (Bacillus halodurans).